Here is a 154-residue protein sequence, read N- to C-terminus: Myoglobin (154 aa).

One can recognise a Globin domain in the interval 2-148; the sequence is GLSDGEWQLV…FRNDIAAKYK (147 aa). S4 is subject to Phosphoserine. H65 is a binding site for nitrite. H65 contacts O2. T68 is subject to Phosphothreonine. Position 94 (H94) interacts with heme b.

It belongs to the globin family. In terms of assembly, monomeric.

It is found in the cytoplasm. The protein resides in the sarcoplasm. It catalyses the reaction Fe(III)-heme b-[protein] + nitric oxide + H2O = Fe(II)-heme b-[protein] + nitrite + 2 H(+). It carries out the reaction H2O2 + AH2 = A + 2 H2O. Monomeric heme protein which primary function is to store oxygen and facilitate its diffusion within muscle tissues. Reversibly binds oxygen through a pentacoordinated heme iron and enables its timely and efficient release as needed during periods of heightened demand. Depending on the oxidative conditions of tissues and cells, and in addition to its ability to bind oxygen, it also has a nitrite reductase activity whereby it regulates the production of bioactive nitric oxide. Under stress conditions, like hypoxia and anoxia, it also protects cells against reactive oxygen species thanks to its pseudoperoxidase activity. This Lutra lutra (European river otter) protein is Myoglobin (MB).